A 96-amino-acid chain; its full sequence is Large ribosomal subunit protein uL23 (96 aa).

Belongs to the universal ribosomal protein uL23 family. As to quaternary structure, part of the 50S ribosomal subunit. Contacts protein L29, and trigger factor when it is bound to the ribosome.

In terms of biological role, one of the early assembly proteins it binds 23S rRNA. One of the proteins that surrounds the polypeptide exit tunnel on the outside of the ribosome. Forms the main docking site for trigger factor binding to the ribosome. In Enterococcus faecalis (strain ATCC 700802 / V583), this protein is Large ribosomal subunit protein uL23.